Here is a 287-residue protein sequence, read N- to C-terminus: Protease HtpX (287 aa).

A run of 2 helical transmembrane segments spans residues 4–24 (IFLL…VMSI) and 33–53 (GGLL…SLAI). Histidine 139 serves as a coordination point for Zn(2+). Glutamate 140 is a catalytic residue. Residue histidine 143 coordinates Zn(2+). 2 consecutive transmembrane segments (helical) span residues 154 to 174 (LIQG…AGII) and 195 to 215 (AVVF…VAYF). Glutamate 220 contacts Zn(2+).

It belongs to the peptidase M48B family. Zn(2+) is required as a cofactor.

It is found in the cell inner membrane. The sequence is that of Protease HtpX from Shewanella oneidensis (strain ATCC 700550 / JCM 31522 / CIP 106686 / LMG 19005 / NCIMB 14063 / MR-1).